Reading from the N-terminus, the 706-residue chain is Choline transporter-like protein 2 (706 aa).

The Cytoplasmic portion of the chain corresponds to 1 to 33 (MGDERPHYYGKHGTPQKYDPTFKGPIYNRGCTD). Threonine 14 carries the post-translational modification Phosphothreonine. The helical transmembrane segment at 34 to 54 (IICCVFLLLAIVGYVAVGIIA) threads the bilayer. Residues 55–232 (WTHGDPRKVI…RIFEDYTVSW (178 aa)) are Extracellular-facing. Asparagine 187 and asparagine 200 each carry an N-linked (GlcNAc...) asparagine glycan. Residues 233–253 (YWIIIGLVIAMAMSLLFIILL) form a helical membrane-spanning segment. At 254 to 256 (RFL) the chain is on the cytoplasmic side. Residues 257–277 (AGIMVWVMIIMVILVLGYGIF) traverse the membrane as a helical segment. The Extracellular portion of the chain corresponds to 278–315 (HCYMEYSRLRGEAGSDVSLVDLGFQTDFRVYLHLRQTW). The helical transmembrane segment at 316 to 336 (LAFMIILSILEVIIILLLIFL) threads the bilayer. Residues 337–364 (RKRILIAIALIKEASRAVGYVMCSLLYP) are Cytoplasmic-facing. Residues 365-385 (LVTFFLLCLCIAYWASTAVFL) traverse the membrane as a helical segment. Topologically, residues 386-457 (STSNEAVYKI…FNAFMFFWLA (72 aa)) are extracellular. Asparagine 417 carries N-linked (GlcNAc...) asparagine glycosylation. A helical membrane pass occupies residues 458–480 (NFVLALGQVTLAGAFASYYWALR). At 481 to 504 (KPDDLPAFPLFSAFGRALRYHTGS) the chain is on the cytoplasmic side. Residues 505–525 (LAFGALILAIVQIIRVILEYL) form a helical membrane-spanning segment. The Extracellular portion of the chain corresponds to 526–563 (DQRLKAAENKFAKCLMTCLKCCFWCLEKFIKFLNRNAY). The chain crosses the membrane as a helical span at residues 564 to 584 (IMIAIYGTNFCTSARNAFFLL). Topologically, residues 585 to 599 (MRNIIRVAVLDKVTD) are cytoplasmic. The chain crosses the membrane as a helical span at residues 600–620 (FLFLLGKLLIVGSVGILAFFF). Residues 621–638 (FTHRIRIVQDTAPPLNYY) are Extracellular-facing. Residues 639 to 659 (WVPILTVIVGSYLIAHGFFSV) form a helical membrane-spanning segment. Topologically, residues 660-706 (YGMCVDTLFLCFLEDLERNDGSAERPYFMSSTLKKLLNKTNKKAAES) are cytoplasmic.

Belongs to the CTL (choline transporter-like) family. Interacts with COCH. As to expression, present in supporting cells of the inner ear (at protein level). In terms of tissue distribution, expressed in inner ear vestibular tissue.

The protein resides in the cell membrane. Its subcellular location is the mitochondrion outer membrane. The catalysed reaction is choline(out) + n H(+)(in) = choline(in) + n H(+)(out). The enzyme catalyses ethanolamine(out) + n H(+)(in) = ethanolamine(in) + n H(+)(out). In terms of biological role, choline/H+ antiporter, mainly in mitochodria. Also acts as a low-affinity ethanolamine/H+ antiporter, regulating the supply of extracellular ethanolamine (Etn) for the CDP-Etn pathway, redistribute intracellular Etn and balance the CDP-Cho and CDP-Etn arms of the Kennedy pathway. Its function is as follows. Does not exhibit choline transporter activity. The chain is Choline transporter-like protein 2 from Homo sapiens (Human).